The chain runs to 66 residues: Putative alpha-neurotoxin RjAa16 (66 aa).

An LCN-type CS-alpha/beta domain is found at 1–60; the sequence is KEGYPVDWGNCKYECMSDAYCKDLCVDRKAKSGYCYKLNWFCYCEGLPDDSPIKTNGHCR. Intrachain disulfides connect Cys11-Cys59, Cys15-Cys35, Cys21-Cys42, and Cys25-Cys44.

Belongs to the long (4 C-C) scorpion toxin superfamily. Sodium channel inhibitor family. Alpha subfamily. As to expression, expressed by the venom gland.

Its subcellular location is the secreted. Functionally, alpha toxins bind voltage-independently at site-3 of sodium channels (Nav) and inhibits the inactivation of the activated channels, thereby blocking neuronal transmission. The protein is Putative alpha-neurotoxin RjAa16 of Rhopalurus junceus (Caribbean blue scorpion).